Consider the following 620-residue polypeptide: 1-deoxy-D-xylulose-5-phosphate synthase (620 aa).

Residues H75 and 116–118 contribute to the thiamine diphosphate site; that span reads AHS. D147 is a Mg(2+) binding site. Thiamine diphosphate-binding positions include 148 to 149, N177, Y284, and E366; that span reads GA. N177 is a Mg(2+) binding site.

This sequence belongs to the transketolase family. DXPS subfamily. As to quaternary structure, homodimer. It depends on Mg(2+) as a cofactor. Thiamine diphosphate is required as a cofactor.

It catalyses the reaction D-glyceraldehyde 3-phosphate + pyruvate + H(+) = 1-deoxy-D-xylulose 5-phosphate + CO2. Its pathway is metabolic intermediate biosynthesis; 1-deoxy-D-xylulose 5-phosphate biosynthesis; 1-deoxy-D-xylulose 5-phosphate from D-glyceraldehyde 3-phosphate and pyruvate: step 1/1. Its function is as follows. Catalyzes the acyloin condensation reaction between C atoms 2 and 3 of pyruvate and glyceraldehyde 3-phosphate to yield 1-deoxy-D-xylulose-5-phosphate (DXP). The protein is 1-deoxy-D-xylulose-5-phosphate synthase of Bordetella pertussis (strain Tohama I / ATCC BAA-589 / NCTC 13251).